A 380-amino-acid polypeptide reads, in one-letter code: Crotonobetainyl-CoA reductase (380 aa).

The protein belongs to the acyl-CoA dehydrogenase family. In terms of assembly, homotetramer. It depends on FAD as a cofactor.

The protein localises to the cytoplasm. It catalyses the reaction 4-(trimethylamino)butanoyl-CoA + oxidized [electron-transfer flavoprotein] + H(+) = crotonobetainyl-CoA + reduced [electron-transfer flavoprotein]. It participates in amine and polyamine metabolism; carnitine metabolism. Functionally, catalyzes the reduction of crotonobetainyl-CoA to gamma-butyrobetainyl-CoA. This chain is Crotonobetainyl-CoA reductase, found in Citrobacter koseri (strain ATCC BAA-895 / CDC 4225-83 / SGSC4696).